The sequence spans 447 residues: MSEEDKSKKLEELLKLLKVHDGDLSKFTSQQRKDMNEYKFWKTQPVTKFDEVIKKEGPIDSSKRPEDIPDTPLPLLGDFEWCTVDVNDEKQLEDVYVLLNENYVEDKDSTFRFNYSRDFLNWGLKPPGWKEEWQVGVRVKETKRLVGFISAIPTNLQVRGNDVRSVEINFLCVHKKLRSKRLAPILIKEVTRRVNKYDIWQALHTGGVVLPSPVSSCRYAHRPLNWSKLYDVEFTALPANATKTQMIAKYTLPKTPISNIKLMEERHVDEAFELFNKYQQRFELRPNFDKEEFRHWILTREDVVYSYIIENDEGKVTDFVSFYSLPFTIINNPLYKDLGIGYMFYYASDADFGYDRFSAEGTERLRKRLNLLINDACILARNLKMDVFNALTSQDNALFLEDLKFGPGDGFLNFYLFNYRCFPITGGIKEDQTFDVEKRSNVGVVLL.

Tetradecanoyl-CoA-binding positions include 38–41 (YKFW), 171–173 (LCV), and 179–183 (SKRLA). Residue Leu-447 is the Proton acceptor; via carboxylate of the active site.

It belongs to the NMT family. In terms of assembly, monomer.

The protein localises to the cytoplasm. The catalysed reaction is N-terminal glycyl-[protein] + tetradecanoyl-CoA = N-tetradecanoylglycyl-[protein] + CoA + H(+). Adds a myristoyl group to the N-terminal glycine residue of certain cellular proteins. This is Glycylpeptide N-tetradecanoyltransferase (NMT1) from Kluyveromyces lactis (strain ATCC 8585 / CBS 2359 / DSM 70799 / NBRC 1267 / NRRL Y-1140 / WM37) (Yeast).